The following is a 396-amino-acid chain: Elongation factor Tu (396 aa).

The region spanning 10-206 (KPHVNIGTIG…AVDEYIPDPV (197 aa)) is the tr-type G domain. The interval 19–26 (GHVDHGKT) is G1. 19–26 (GHVDHGKT) is a binding site for GTP. Threonine 26 lines the Mg(2+) pocket. The interval 62 to 66 (GITIN) is G2. The segment at 83–86 (DAPG) is G3. GTP contacts are provided by residues 83-87 (DAPGH) and 138-141 (NKSD). Positions 138 to 141 (NKSD) are G4. The segment at 176–178 (SGL) is G5.

This sequence belongs to the TRAFAC class translation factor GTPase superfamily. Classic translation factor GTPase family. EF-Tu/EF-1A subfamily. In terms of assembly, monomer.

Its subcellular location is the cytoplasm. The catalysed reaction is GTP + H2O = GDP + phosphate + H(+). In terms of biological role, GTP hydrolase that promotes the GTP-dependent binding of aminoacyl-tRNA to the A-site of ribosomes during protein biosynthesis. This chain is Elongation factor Tu, found in Micrococcus luteus (strain ATCC 4698 / DSM 20030 / JCM 1464 / CCM 169 / CCUG 5858 / IAM 1056 / NBRC 3333 / NCIMB 9278 / NCTC 2665 / VKM Ac-2230) (Micrococcus lysodeikticus).